A 507-amino-acid polypeptide reads, in one-letter code: MTDKKYIVALDQGTTSSRAVILDHDANIVSVSQREFKQIYPQAGWVEHDPMELYATQSAVLTEILAKESIRSDQIAAIGITNQRETTIVWNRETGIPVYNAIVWQCRRTASICDALKEQPGLEDYIRENTGLVLDPYFSGTKIKWILDNVEGAREDAEAGKLMFGTVDTWLVWKMTQRHVHVTDYTNASRTMLFNINTLKWDEKLLKILGIPLSMMAEVKSSSEVYGQTNIGGVGGTRIPIAGIAGDQQAALYGHMCVEKGQAKNTYGTGCFLLMNTGKEKVTSSNGLLTTLACGPKGEASYALEGAVFMGGASIQWLRDEMKLLADAKDSEYFATKVDSSNGVYVVPAFTGLGAPYWDPYARGTIVGLTRGVNSNHIIRATLESIAYQTRDVLDAMQADSGIKLSALRVDGGAVANNFLMQFQSDVLDTTVQRPAVSEVTALGAAYLAGLAVGYWESLEELAGKAVIEQTFEPHADPVKRKQRYRGWKRAVKCTQAWAEMHDEDFE.

T14 serves as a coordination point for ADP. Residues T14, T15, and S16 each coordinate ATP. Residue T14 coordinates sn-glycerol 3-phosphate. Residue R18 participates in ADP binding. Positions 84, 85, 137, and 247 each coordinate sn-glycerol 3-phosphate. R84, E85, Y137, D247, and Q248 together coordinate glycerol. Positions 269 and 312 each coordinate ADP. 4 residues coordinate ATP: T269, G312, Q316, and G413. G413 and N417 together coordinate ADP.

The protein belongs to the FGGY kinase family.

The catalysed reaction is glycerol + ATP = sn-glycerol 3-phosphate + ADP + H(+). The protein operates within polyol metabolism; glycerol degradation via glycerol kinase pathway; sn-glycerol 3-phosphate from glycerol: step 1/1. With respect to regulation, inhibited by fructose 1,6-bisphosphate (FBP). Key enzyme in the regulation of glycerol uptake and metabolism. Catalyzes the phosphorylation of glycerol to yield sn-glycerol 3-phosphate. This is Glycerol kinase from Psychromonas ingrahamii (strain DSM 17664 / CCUG 51855 / 37).